A 561-amino-acid polypeptide reads, in one-letter code: Putative transport protein YbjL (561 aa).

Transmembrane regions (helical) follow at residues 8-28 (LLNGNYILLLFVVLALGLCLG), 32-52 (LGSVQLGNSIGVLVVSLLLGQ), 66-86 (FMLFIFCVGVEAGPNFFSIFF), 94-114 (MLALVMVGSALLIALGLGKLF), and 158-178 (NLSLGYALTYLIGLVSLIVGA). RCK C-terminal domains are found at residues 200–288 (RGLD…SFRN) and 292–373 (VFDR…RIGF). The next 5 membrane-spanning stretches (helical) occupy residues 383–403 (LLAFCAFFIIGLMIGMITFQF), 406–426 (FSFGIGNAAGLLFAGIMLGFL), 447–467 (FGLMVFMAGVGLSAGSGISNG), 475–495 (MLIAGLVVSLVPVVICFLFGA), and 540–560 (AIANVLLTLAGTLIVIIWPGL).

It belongs to the AAE transporter (TC 2.A.81) family. YbjL subfamily.

The protein resides in the cell membrane. This Salmonella agona (strain SL483) protein is Putative transport protein YbjL.